A 236-amino-acid chain; its full sequence is Small ribosomal subunit protein uS2c (236 aa).

It belongs to the universal ribosomal protein uS2 family.

Its subcellular location is the plastid. The protein localises to the chloroplast. The protein is Small ribosomal subunit protein uS2c (rps2) of Panax ginseng (Korean ginseng).